The sequence spans 255 residues: 5'-nucleotidase SurE (255 aa).

A divalent metal cation contacts are provided by D11, D12, S43, and N99.

This sequence belongs to the SurE nucleotidase family. Requires a divalent metal cation as cofactor.

The protein resides in the cytoplasm. It carries out the reaction a ribonucleoside 5'-phosphate + H2O = a ribonucleoside + phosphate. Nucleotidase that shows phosphatase activity on nucleoside 5'-monophosphates. In Caldanaerobacter subterraneus subsp. tengcongensis (strain DSM 15242 / JCM 11007 / NBRC 100824 / MB4) (Thermoanaerobacter tengcongensis), this protein is 5'-nucleotidase SurE.